The following is a 454-amino-acid chain: uncharacterized protein (454 aa).

The signal sequence occupies residues 1–21 (MKYKTVKSIPLFLLGSIVFTA). Cys22 carries the N-palmitoyl cysteine lipid modification. Cys22 carries the S-diacylglycerol cysteine lipid modification. Positions 55-64 (ASSSSSTTTS) are enriched in low complexity. Residues 55 to 87 (ASSSSSTTTSNDDNNQKGYFLETNRSTGTYDPN) are disordered. Residues 65–87 (NDDNNQKGYFLETNRSTGTYDPN) are compositionally biased toward polar residues.

The protein localises to the cell membrane. This is an uncharacterized protein from Mycoplasma pneumoniae (strain ATCC 29342 / M129 / Subtype 1) (Mycoplasmoides pneumoniae).